A 339-amino-acid chain; its full sequence is MVREEVAGSTQTLQWKCVESRVDSKRLYYGRFILSPLRKGQADTVGIALRRALLGEIEGTCIARAKFGSVPHEYSTIAGIEESVQEILLNLKEIVLRSNLYGVRDASICVKGPRYITAQDIILPPSVEIVDTAQPIANLTEPIDFCIDLQIKRDRGYQTELRKNYQDGSYPIDAVSMPVRNVNYSIFSCGNGNEKHEILFLEIWTNGSLTPKEALYEASRNLIDLFLPFLHAEEEGTSFEENKNRFTPPLFTFKKRLTNLKKNKKGIPLNCIFIDQLELTSRTYNCLKRANIHTLLDLLSKTEEDLMRIDSFRMEDRKHIWDTLEKHLPIDLLKNKLSF.

The tract at residues M1–E233 is alpha N-terminal domain (alpha-NTD). The tract at residues K264 to F339 is alpha C-terminal domain (alpha-CTD).

Belongs to the RNA polymerase alpha chain family. In terms of assembly, in plastids the minimal PEP RNA polymerase catalytic core is composed of four subunits: alpha, beta, beta', and beta''. When a (nuclear-encoded) sigma factor is associated with the core the holoenzyme is formed, which can initiate transcription.

The protein resides in the plastid. It localises to the chloroplast. The enzyme catalyses RNA(n) + a ribonucleoside 5'-triphosphate = RNA(n+1) + diphosphate. DNA-dependent RNA polymerase catalyzes the transcription of DNA into RNA using the four ribonucleoside triphosphates as substrates. This is DNA-directed RNA polymerase subunit alpha from Bromus inermis (Smooth brome grass).